The primary structure comprises 245 residues: Small ribosomal subunit protein uS3 (245 aa).

The 72-residue stretch at 21–92 (LNEFLTRELA…SVELYAEKVA (72 aa)) folds into the KH type-2 domain. The interval 215 to 245 (EEILPTTPVSEQKGAKPEVPVMPQGAPVPTA) is disordered.

It belongs to the universal ribosomal protein uS3 family.

It localises to the cytoplasm. The protein localises to the nucleus. Its subcellular location is the nucleolus. The protein resides in the mitochondrion inner membrane. It is found in the cytoskeleton. It localises to the spindle. It carries out the reaction 2'-deoxyribonucleotide-(2'-deoxyribose 5'-phosphate)-2'-deoxyribonucleotide-DNA = a 3'-end 2'-deoxyribonucleotide-(2,3-dehydro-2,3-deoxyribose 5'-phosphate)-DNA + a 5'-end 5'-phospho-2'-deoxyribonucleoside-DNA + H(+). In terms of biological role, component of the small ribosomal subunit. The ribosome is a large ribonucleoprotein complex responsible for the synthesis of proteins in the cell. Has endonuclease activity and plays a role in repair of damaged DNA. Also involved in other processes including regulation of transcription, translation of its cognate mRNA, spindle formation and chromosome movement during mitosis, and apoptosis. The sequence is that of Small ribosomal subunit protein uS3 (rps3) from Ictalurus punctatus (Channel catfish).